A 242-amino-acid polypeptide reads, in one-letter code: Uridylate kinase (242 aa).

15–18 (KLSG) is an ATP binding site. Positions 23-28 (GDEGFG) are involved in allosteric activation by GTP. Gly-57 contacts UMP. Gly-58 and Arg-62 together coordinate ATP. UMP is bound by residues Asp-77 and 138–145 (TGNPFCTT). 3 residues coordinate ATP: Thr-165, Tyr-171, and Asp-174.

The protein belongs to the UMP kinase family. In terms of assembly, homohexamer.

The protein localises to the cytoplasm. The enzyme catalyses UMP + ATP = UDP + ADP. It functions in the pathway pyrimidine metabolism; CTP biosynthesis via de novo pathway; UDP from UMP (UMPK route): step 1/1. Allosterically activated by GTP. Inhibited by UTP. Catalyzes the reversible phosphorylation of UMP to UDP. The chain is Uridylate kinase from Shewanella sp. (strain MR-4).